The sequence spans 141 residues: MAKKVTGVVKLQLPAGKATPAPPVGPALGGYGINIMAFVKEYNEKTASQAGSVVPVEVTVYSDRSFTITLKTPPAADLLRKVAGIEKGSGTPNRKIAGTITKKQLRQVAEQKMADLNAFDIEAAEKIIAGTARSMGIKIVD.

It belongs to the universal ribosomal protein uL11 family. In terms of assembly, part of the ribosomal stalk of the 50S ribosomal subunit. Interacts with L10 and the large rRNA to form the base of the stalk. L10 forms an elongated spine to which L12 dimers bind in a sequential fashion forming a multimeric L10(L12)X complex. One or more lysine residues are methylated.

Functionally, forms part of the ribosomal stalk which helps the ribosome interact with GTP-bound translation factors. In Roseiflexus sp. (strain RS-1), this protein is Large ribosomal subunit protein uL11.